The sequence spans 1530 residues: Coiled-coil domain-containing protein 141 (1530 aa).

Phosphothreonine is present on Thr91. 3 coiled-coil regions span residues 642 to 706 (VKNE…EALM), 758 to 783 (VKEKSQQLKDLIHFHQKQKERIQDYE), and 861 to 970 (SNVS…KTSD). Residues 1210 to 1241 (SPDDISLPPLPGSPESPLAPSDMEVEEPVSSS) form a disordered region. The region spanning 1409-1530 (PNFSRLLSNV…VSLMYWLLTQ (122 aa)) is the Ig-like domain.

As to quaternary structure, interacts with DISC1. Interacts preferentially with phosphorylated forms of myosin regulatory light chain (MRLC). Interacts (via the N-terminal region) with HDAC6; inhibits the deacetylase activity of HDAC6. Interacts with KIBRA (via the C-terminal region); retains AMPAR in the cytosol after internalization. Ubiquitinated and degradated by the CDC20-APC/C pathway. During brain development, CDC20-APC/C complex degrades CCDC141 after centrosome translocation into the dilated area. CCDC141 is restabilized in the dilation until the centrosome enters the dilation, at which point it is once again immediately destabilized by CDC20-APC/C complex. The oscillatory regulation of CCDC141 protein is needed for proper cortical migration. In terms of processing, phosphorylation at Thr-91 by PLK1 affects CCDC141 degradation.

It is found in the cytoplasm. The protein resides in the cytoskeleton. Its subcellular location is the microtubule organizing center. The protein localises to the centrosome. Functionally, plays a critical role in cortical radial and GnRH neurons migration during brain development. Regulates cortical radial migration by negatively controlling the activity of histone deacetylase 6 (HDAC6) and promotes centrosome maturation. CAMDI is required for dilation formation of cortical neurons during radial migration. Plays a critical role in learning and memory performance through regulation of AMPA-selective glutamate receptors (AMPARs) cell surface expression in competition with KIBRA. This chain is Coiled-coil domain-containing protein 141 (CCDC141), found in Homo sapiens (Human).